We begin with the raw amino-acid sequence, 131 residues long: Transcription antitermination protein NusB (131 aa).

The protein belongs to the NusB family.

Involved in transcription antitermination. Required for transcription of ribosomal RNA (rRNA) genes. Binds specifically to the boxA antiterminator sequence of the ribosomal RNA (rrn) operons. The chain is Transcription antitermination protein NusB from Ligilactobacillus salivarius (strain UCC118) (Lactobacillus salivarius).